We begin with the raw amino-acid sequence, 333 residues long: MPPSPAVVGRSLVNSFKQFVSKDLHTRHVDATYRLVLDCVAAVDPLMRLYTFGSTVVYGVHEKGSDVDFVVLNKTDVEDGKGGDAATQVAKGLQADILAKLARVIRQKHLSWNVEEVRRTRVPVVRVKGGGAVDFDITAYRRNGVRNSALLRAYFEQNPPCRWLSMSIKRWSKQTGLNASVIGGSITSYGFNLMVVYYLLQRNHLQFVPPSTIDVSRVEPLPPHLPLEEPADEGLELGTQVLDFLHFFLHEFDSDKQVISLNRPGITTKEELDWTKSAEDFARMNGEKVHYQWCIEDPYELNLNVGRNVTPLKRDFLRRHLEKARDTALLTIV.

UTP is bound by residues Ser-54 and 65 to 68; that span reads SDVD. Residues Asp-66 and Asp-68 each coordinate Mg(2+). Arg-121 is a binding site for RNA. Residues 144 to 148, Lys-169, Lys-173, and 188 to 189 contribute to the UTP site; these read GVRNS and SY. Residues 237–302 enclose the PAP-associated domain; it reads LGTQVLDFLH…WCIEDPYELN (66 aa).

Belongs to the DNA polymerase type-B-like family. Monomer. Mg(2+) serves as cofactor. The cofactor is Mn(2+).

It carries out the reaction RNA(n) + UTP = RNA(n)-3'-uridine ribonucleotide + diphosphate. The 3' uridylated RNA substrate is involved in the selective incorporation of UTP; UTP binding is favored due to the constraint posed on the positioning of the NTP base by the continuous stacking interactions between Tyr-189 side chain, the bound NTP, and the terminal nucleoside base of the RNA substrate. Functionally, terminal uridylyltransferase which, specifically, catalyzes the addition of Us to the 3'-hydroxyl group of single-stranded RNAs with a 3'-terminal U. The polypeptide is Terminal uridylyltransferase 4 (Trypanosoma brucei brucei (strain 927/4 GUTat10.1)).